The sequence spans 185 residues: GTP-binding protein rhb1 (185 aa).

GTP is bound by residues Ser16, Gly18, Lys19, Ser20, Ser21, Val32, Tyr35, Thr38, Asn119, Asp122, and Ala150. Ser20 is a Mg(2+) binding site. The Effector region motif lies at 35–43; it reads YYPTIENTF. Residue Thr38 coordinates Mg(2+). Residue Cys182 is modified to Cysteine methyl ester. A lipid anchor (S-farnesyl cysteine) is attached at Cys182. Positions 183-185 are cleaved as a propeptide — removed in mature form; it reads VIA.

The protein belongs to the small GTPase superfamily. Rheb family.

The protein localises to the cell membrane. It carries out the reaction GTP + H2O = GDP + phosphate + H(+). Binds GTP and exhibits intrinsic GTPase activity. Regulates entry into stationary phase when extracellular nitrogen levels are adequate for growth. The protein is GTP-binding protein rhb1 (rhb1) of Schizosaccharomyces pombe (strain 972 / ATCC 24843) (Fission yeast).